We begin with the raw amino-acid sequence, 156 residues long: Small ribosomal subunit protein uS7 (156 aa).

It belongs to the universal ribosomal protein uS7 family. As to quaternary structure, part of the 30S ribosomal subunit. Contacts proteins S9 and S11.

Functionally, one of the primary rRNA binding proteins, it binds directly to 16S rRNA where it nucleates assembly of the head domain of the 30S subunit. Is located at the subunit interface close to the decoding center, probably blocks exit of the E-site tRNA. In Mesorhizobium japonicum (strain LMG 29417 / CECT 9101 / MAFF 303099) (Mesorhizobium loti (strain MAFF 303099)), this protein is Small ribosomal subunit protein uS7.